The sequence spans 323 residues: tRNA U34 carboxymethyltransferase (323 aa).

Residues lysine 91, tryptophan 105, lysine 110, glycine 130, 152–154 (DPT), 181–182 (IE), methionine 196, tyrosine 200, and arginine 315 contribute to the carboxy-S-adenosyl-L-methionine site.

It belongs to the class I-like SAM-binding methyltransferase superfamily. CmoB family. As to quaternary structure, homotetramer.

It carries out the reaction carboxy-S-adenosyl-L-methionine + 5-hydroxyuridine(34) in tRNA = 5-carboxymethoxyuridine(34) in tRNA + S-adenosyl-L-homocysteine + H(+). Functionally, catalyzes carboxymethyl transfer from carboxy-S-adenosyl-L-methionine (Cx-SAM) to 5-hydroxyuridine (ho5U) to form 5-carboxymethoxyuridine (cmo5U) at position 34 in tRNAs. The chain is tRNA U34 carboxymethyltransferase from Escherichia coli O157:H7.